Consider the following 574-residue polypeptide: Galectin-3-binding protein (574 aa).

An N-terminal signal peptide occupies residues 1-18; the sequence is MALLWLLSVFLLVPGTQG. In terms of domain architecture, SRCR spans 24 to 124; sequence MRLVNGASAS…HEKDAGVVCS (101 aa). 3 cysteine pairs are disulfide-bonded: C49–C113, C62–C123, and C93–C103. N-linked (GlcNAc...) asparagine glycosylation is found at N69, N96, N102, and N125. The BTB domain maps to 153–221; that stretch reads CDLFIQVTGQ…FYSRRIEVSM (69 aa). Residues 260–360 form the BACK domain; the sequence is PLELYEYAQA…MLPQELFELQ (101 aa). N362, N398, N540, and N569 each carry an N-linked (GlcNAc...) asparagine glycan.

As to quaternary structure, homodimers and homomultimers. The multimers form ring-like structures with a diameter of 30-40 nm. Binds LGALS1 and LGALS3. Binds ITGB1, COL4A1, COL5A1, COL6A1, FN1 and NID. The unglycosylated form interacts with PDE4DIP; this interaction, which is PDE4DIP isoform-specific, may connect a pericentrosomal complex to the gamma-tubulin ring complex (gamma-TuRC) to promote microtubule assembly and acetylation. As to expression, detected in thyroid (at protein level).

It localises to the secreted. The protein localises to the extracellular space. The protein resides in the extracellular matrix. Functionally, promotes integrin-mediated cell adhesion. May stimulate host defense against viruses and tumor cells. The chain is Galectin-3-binding protein (Lgals3bp) from Rattus norvegicus (Rat).